Consider the following 355-residue polypeptide: Protein RecA (355 aa).

67 to 74 (GPESSGKT) contributes to the ATP binding site.

Belongs to the RecA family.

Its subcellular location is the cytoplasm. Functionally, can catalyze the hydrolysis of ATP in the presence of single-stranded DNA, the ATP-dependent uptake of single-stranded DNA by duplex DNA, and the ATP-dependent hybridization of homologous single-stranded DNAs. It interacts with LexA causing its activation and leading to its autocatalytic cleavage. The polypeptide is Protein RecA (Shewanella baltica (strain OS223)).